The chain runs to 856 residues: MNESKSVASNELTSGKVERTTLKLSDKLKISSNIQQGNKFSLNKSITTVEVRKSKKRKNIDEAARSSLLLQNNDIDGNSEDKNSLTIQEQISRMNALQNASNNEKREELSSDSNKHIEEEVISVKAEVEQPVDVVLPNDNLLIESDSSEKVIVDPVTDSEHADKDVQDVVMLDEFVSSNLDDAGDQKNGDQSDDISDLLEHKGIEGKKLKKYEKEHEEKKGNPKKVMSNNTYTKHVKLVIEEELEEDNNKQVIKNYRSKKNRVTNRSVKNKITRKVLIPNKITVQELANSMSERVKDVQQVLYQITGKHDIKLTDYLDSDQASIIVEAFNHTFKLVDNAKLENDLYSDGNNMELIPRAPVVTVMGHVDHGKTSLLDAIRESNVVDGEFKGITQHIGAYQITLNGDKKITFIDTPGHEAFAAMRAHGTNVTDIVVLVVAADDGIMPQTIESINHVKAANVAMIVAVNKIDKHDADLDRITNALLQHGVVAESLGGDVIVVPVSAKEKINLDQLKSSILLIADLLELKAVYNTRASGTVIESKVDKNCGVVATLIVQKGTLKVGDIIVAGNQAYGRVRNMFNADGGSEKVAIPSMPVKVFGLNNVPNFGTSFIVVDSEKQARELINYRQDLLNVELSKQPAIDKSNVLLYDMVDELNVILKCDVMGSIEAICYSIGKITHKDIRVNILYKGVGNITKSDVLLAETSNSIILAFNVKTDTQVKELAKQKNIEIKHYFVIYDIIDDIKKILTGMLKPLKQEVQIGTLSVRKVFSVGNNGSVLGCYVTSGLVKKGALVKLVRNNNIIHEGKIKVLRRFKDDVKEVTAGFECGILLDYSKEIYPESDVMNIFEIVEEIRVIQ.

Positions 356-526 (PRAPVVTVMG…LLIADLLELK (171 aa)) constitute a tr-type G domain. The segment at 365–372 (GHVDHGKT) is G1. 365 to 372 (GHVDHGKT) lines the GTP pocket. The interval 390-394 (GITQH) is G2. The G3 stretch occupies residues 412–415 (DTPG). GTP is bound by residues 412-416 (DTPGH) and 466-469 (NKID). A G4 region spans residues 466 to 469 (NKID). The G5 stretch occupies residues 502–504 (SAK).

It belongs to the TRAFAC class translation factor GTPase superfamily. Classic translation factor GTPase family. IF-2 subfamily.

The protein resides in the cytoplasm. Functionally, one of the essential components for the initiation of protein synthesis. Protects formylmethionyl-tRNA from spontaneous hydrolysis and promotes its binding to the 30S ribosomal subunits. Also involved in the hydrolysis of GTP during the formation of the 70S ribosomal complex. The protein is Translation initiation factor IF-2 of Ehrlichia ruminantium (strain Gardel).